Reading from the N-terminus, the 124-residue chain is Small ribosomal subunit protein uS13 (124 aa).

Positions 95–124 (GLPVRGQRTKTNARTRKGPKRTIAGKKKAK) are disordered.

Belongs to the universal ribosomal protein uS13 family. In terms of assembly, part of the 30S ribosomal subunit. Forms a loose heterodimer with protein S19. Forms two bridges to the 50S subunit in the 70S ribosome.

Located at the top of the head of the 30S subunit, it contacts several helices of the 16S rRNA. In the 70S ribosome it contacts the 23S rRNA (bridge B1a) and protein L5 of the 50S subunit (bridge B1b), connecting the 2 subunits; these bridges are implicated in subunit movement. Contacts the tRNAs in the A and P-sites. The protein is Small ribosomal subunit protein uS13 of Rhodococcus erythropolis (strain PR4 / NBRC 100887).